Here is a 157-residue protein sequence, read N- to C-terminus: 2-C-methyl-D-erythritol 2,4-cyclodiphosphate synthase (157 aa).

A divalent metal cation contacts are provided by D8 and H10. Residues 8-10 (DVH) and 34-35 (HS) each bind 4-CDP-2-C-methyl-D-erythritol 2-phosphate. Position 42 (H42) interacts with a divalent metal cation. Residues 56–58 (DIG), 61–65 (FPDTD), 132–135 (TTEE), and F139 each bind 4-CDP-2-C-methyl-D-erythritol 2-phosphate.

Belongs to the IspF family. Homotrimer. Requires a divalent metal cation as cofactor.

It carries out the reaction 4-CDP-2-C-methyl-D-erythritol 2-phosphate = 2-C-methyl-D-erythritol 2,4-cyclic diphosphate + CMP. Its pathway is isoprenoid biosynthesis; isopentenyl diphosphate biosynthesis via DXP pathway; isopentenyl diphosphate from 1-deoxy-D-xylulose 5-phosphate: step 4/6. Its function is as follows. Involved in the biosynthesis of isopentenyl diphosphate (IPP) and dimethylallyl diphosphate (DMAPP), two major building blocks of isoprenoid compounds. Catalyzes the conversion of 4-diphosphocytidyl-2-C-methyl-D-erythritol 2-phosphate (CDP-ME2P) to 2-C-methyl-D-erythritol 2,4-cyclodiphosphate (ME-CPP) with a corresponding release of cytidine 5-monophosphate (CMP). This chain is 2-C-methyl-D-erythritol 2,4-cyclodiphosphate synthase, found in Clostridium botulinum (strain Alaska E43 / Type E3).